The following is a 314-amino-acid chain: DegV domain-containing protein XAC3508 (314 aa).

In terms of domain architecture, DegV spans 3–307 (IGIVVDSACD…KGALAVGFAA (305 aa)). The hexadecanoate site is built by Thr63 and Ser96.

In terms of biological role, may bind long-chain fatty acids, such as palmitate, and may play a role in lipid transport or fatty acid metabolism. The polypeptide is DegV domain-containing protein XAC3508 (Xanthomonas axonopodis pv. citri (strain 306)).